The primary structure comprises 434 residues: Asparagine--tRNA ligase (434 aa).

Belongs to the class-II aminoacyl-tRNA synthetase family.

It is found in the cytoplasm. It catalyses the reaction tRNA(Asn) + L-asparagine + ATP = L-asparaginyl-tRNA(Asn) + AMP + diphosphate + H(+). The chain is Asparagine--tRNA ligase (asnS) from Pyrococcus furiosus (strain ATCC 43587 / DSM 3638 / JCM 8422 / Vc1).